The primary structure comprises 396 residues: Phosphoglycerate kinase (396 aa).

Substrate-binding positions include 21-23 (DFN), Arg36, 59-62 (HLGK), Arg119, and Arg156. ATP is bound by residues Lys206, Gly294, Glu325, and 352–355 (GGDS).

This sequence belongs to the phosphoglycerate kinase family. As to quaternary structure, monomer.

It localises to the cytoplasm. It catalyses the reaction (2R)-3-phosphoglycerate + ATP = (2R)-3-phospho-glyceroyl phosphate + ADP. It participates in carbohydrate degradation; glycolysis; pyruvate from D-glyceraldehyde 3-phosphate: step 2/5. The sequence is that of Phosphoglycerate kinase from Listeria monocytogenes serotype 4a (strain HCC23).